The primary structure comprises 230 residues: Sugar fermentation stimulation protein homolog (230 aa).

It belongs to the SfsA family.

This chain is Sugar fermentation stimulation protein homolog, found in Thermoanaerobacter pseudethanolicus (strain ATCC 33223 / 39E) (Clostridium thermohydrosulfuricum).